Here is a 726-residue protein sequence, read N- to C-terminus: Mitotic spindle checkpoint protein MAD1 (726 aa).

The tract at residues 1-30 (MILRTPQPKRLRSDAGESPFPTGATGSGNQ) is disordered. Coiled coils occupy residues 68–246 (ADVL…LKLI) and 272–625 (SDNS…VFAD).

Belongs to the MAD1 family. Homodimer. Part of the mitotic checkpoint complex (MCC). Interacts with MAD2 and NUA.

It localises to the nucleus envelope. Functionally, required for the execution of the mitotic checkpoint which monitors the process of kinetochore-spindle attachment and delays the onset of anaphase when this process is not complete. It inhibits the activity of the anaphase promoting complex by sequestering CDC20 until all chromosomes are aligned at the metaphase plate. Required for anchoring MAD2 to the nuclear envelope. This chain is Mitotic spindle checkpoint protein MAD1, found in Arabidopsis thaliana (Mouse-ear cress).